Consider the following 118-residue polypeptide: V-type proton ATPase subunit G 1 (118 aa).

Position 2 is an N-acetylalanine (Ala-2). Residues 25 to 90 (ARKRKARRLK…VQGMQSSQQR (66 aa)) form a disordered region. Over residues 35–56 (QAKEEAQMEVEQYRREREHEFQ) the composition is skewed to basic and acidic residues. Polar residues-rich tracts occupy residues 57–69 (SKQQ…QGNL) and 78–89 (RHQVQGMQSSQQ).

The protein belongs to the V-ATPase G subunit family. As to quaternary structure, V-ATPase is a heteromultimeric enzyme made up of two complexes: the ATP-hydrolytic V1 complex and the proton translocation V0 complex. The V1 complex consists of three catalytic AB heterodimers that form a heterohexamer, three peripheral stalks each consisting of EG heterodimers, one central rotor including subunits D and F, and the regulatory subunits C and H. The proton translocation complex V0 consists of the proton transport subunit a, a ring of proteolipid subunits c9c'', rotary subunit d, subunits e and f, and the accessory subunits ATP6AP1/Ac45 and ATP6AP2/PRR.

The protein localises to the apical cell membrane. In terms of biological role, subunit of the V1 complex of vacuolar(H+)-ATPase (V-ATPase), a multisubunit enzyme composed of a peripheral complex (V1) that hydrolyzes ATP and a membrane integral complex (V0) that translocates protons. V-ATPase is responsible for acidifying and maintaining the pH of intracellular compartments and in some cell types, is targeted to the plasma membrane, where it is responsible for acidifying the extracellular environment. In aerobic conditions, involved in intracellular iron homeostasis, thus triggering the activity of Fe(2+) prolyl hydroxylase (PHD) enzymes, and leading to HIF1A hydroxylation and subsequent proteasomal degradation. This Pan troglodytes (Chimpanzee) protein is V-type proton ATPase subunit G 1 (ATP6V1G1).